We begin with the raw amino-acid sequence, 443 residues long: Probable glycine dehydrogenase (decarboxylating) subunit 1 (443 aa).

Belongs to the GcvP family. N-terminal subunit subfamily. The glycine cleavage system is composed of four proteins: P, T, L and H. In this organism, the P 'protein' is a heterodimer of two subunits.

The enzyme catalyses N(6)-[(R)-lipoyl]-L-lysyl-[glycine-cleavage complex H protein] + glycine + H(+) = N(6)-[(R)-S(8)-aminomethyldihydrolipoyl]-L-lysyl-[glycine-cleavage complex H protein] + CO2. In terms of biological role, the glycine cleavage system catalyzes the degradation of glycine. The P protein binds the alpha-amino group of glycine through its pyridoxal phosphate cofactor; CO(2) is released and the remaining methylamine moiety is then transferred to the lipoamide cofactor of the H protein. In Nitratidesulfovibrio vulgaris (strain DP4) (Desulfovibrio vulgaris), this protein is Probable glycine dehydrogenase (decarboxylating) subunit 1.